The primary structure comprises 264 residues: tRNA pseudouridine synthase A (264 aa).

Aspartate 51 (nucleophile) is an active-site residue. Tyrosine 109 is a binding site for substrate.

This sequence belongs to the tRNA pseudouridine synthase TruA family. As to quaternary structure, homodimer.

The catalysed reaction is uridine(38/39/40) in tRNA = pseudouridine(38/39/40) in tRNA. Formation of pseudouridine at positions 38, 39 and 40 in the anticodon stem and loop of transfer RNAs. This is tRNA pseudouridine synthase A from Pseudoalteromonas translucida (strain TAC 125).